A 485-amino-acid chain; its full sequence is Glutamyl-tRNA(Gln) amidotransferase subunit A (485 aa).

Active-site charge relay system residues include lysine 79 and serine 154. Serine 178 acts as the Acyl-ester intermediate in catalysis.

The protein belongs to the amidase family. GatA subfamily. Heterotrimer of A, B and C subunits.

It catalyses the reaction L-glutamyl-tRNA(Gln) + L-glutamine + ATP + H2O = L-glutaminyl-tRNA(Gln) + L-glutamate + ADP + phosphate + H(+). Functionally, allows the formation of correctly charged Gln-tRNA(Gln) through the transamidation of misacylated Glu-tRNA(Gln) in organisms which lack glutaminyl-tRNA synthetase. The reaction takes place in the presence of glutamine and ATP through an activated gamma-phospho-Glu-tRNA(Gln). This is Glutamyl-tRNA(Gln) amidotransferase subunit A from Carboxydothermus hydrogenoformans (strain ATCC BAA-161 / DSM 6008 / Z-2901).